Reading from the N-terminus, the 635-residue chain is Moesin/ezrin/radixin homolog 2 (635 aa).

Positions 12 to 305 (LSVRVSTFDS…GNHDLYMRRR (294 aa)) constitute an FERM domain.

As to quaternary structure, interacts with Moe and arm at the adherens junction. Forms a complex with Kibra and Ex. Interacts (via FERM domain) with Sav (via FBM motif). Interacts with Schip1. As to expression, expressed predominantly in the germline. Expressed in the developing oocyte from stage 6 to the end of oogenesis and in the apical ends of follical cells from stage 10. Ubiquitous expression throughout embryogenesis with enhanced expression in mesoderm of early embryos and midgut of late embryos. In embryonic CNS, expression is seen in neuropil and developing brain and is enhanced in neuronal cell bodies. In embryonic PNS, expression is seen within the cell body. In third instar larvae, expression is uniform in the eye imaginal disk and is enhanced at the morphogenetic furrow. In pupal eyes, expression is seen in the cytoplasm of secondary and tertiary pigment cells, bristle precursor cells and rhabdomeres.

The protein resides in the cell junction. Its subcellular location is the adherens junction. It localises to the cell membrane. The protein localises to the cytoplasm. It is found in the cytoskeleton. The protein resides in the apical cell membrane. Its subcellular location is the cell projection. It localises to the rhabdomere. In terms of biological role, regulator of the Hippo/SWH (Sav/Wts/Hpo) signaling pathway, a signaling pathway that plays a pivotal role in organ size control and tumor suppression by restricting proliferation and promoting apoptosis. The core of this pathway is composed of a kinase cascade wherein Hippo (Hpo), in complex with its regulatory protein Salvador (Sav), phosphorylates and activates Warts (Wts) in complex with its regulatory protein Mats, which in turn phosphorylates and inactivates the Yorkie (Yki) oncoprotein. Mer acts synergistically along with Ex and Kibra to regulate the Hippo signaling pathway. The sequence is that of Moesin/ezrin/radixin homolog 2 (Mer) from Drosophila melanogaster (Fruit fly).